A 160-amino-acid chain; its full sequence is MTDTSNSLQDLGTLTGAPSAQPVKSVEPKIDAQGRAYGTGRRKEAVARVWIKPGSGKIIINGRDQETYFARPVLRMVIAQPLIEAGRATEFDVIATVKGSGLMGQAGAVRHGISRALVAYEPGLRAVLKPFGFMTRDPRVVERKKYGKAKARRSFQFSKR.

Residues 1-18 are compositionally biased toward polar residues; it reads MTDTSNSLQDLGTLTGAP. The disordered stretch occupies residues 1–37; it reads MTDTSNSLQDLGTLTGAPSAQPVKSVEPKIDAQGRAY.

Belongs to the universal ribosomal protein uS9 family.

This Hyphomonas neptunium (strain ATCC 15444) protein is Small ribosomal subunit protein uS9.